The primary structure comprises 374 residues: tRNA-specific 2-thiouridylase MnmA (374 aa).

ATP-binding positions include 17 to 24 (GMSGGVDS) and M43. The interval 103-105 (NPD) is interaction with target base in tRNA. The active-site Nucleophile is C108. An intrachain disulfide couples C108 to C204. An ATP-binding site is contributed by G132. Positions 154-156 (KDQ) are interaction with tRNA. C204 functions as the Cysteine persulfide intermediate in the catalytic mechanism. The tract at residues 316–317 (RY) is interaction with tRNA.

It belongs to the MnmA/TRMU family.

Its subcellular location is the cytoplasm. It catalyses the reaction S-sulfanyl-L-cysteinyl-[protein] + uridine(34) in tRNA + AH2 + ATP = 2-thiouridine(34) in tRNA + L-cysteinyl-[protein] + A + AMP + diphosphate + H(+). Its function is as follows. Catalyzes the 2-thiolation of uridine at the wobble position (U34) of tRNA, leading to the formation of s(2)U34. The chain is tRNA-specific 2-thiouridylase MnmA from Pseudomonas putida (strain GB-1).